A 569-amino-acid polypeptide reads, in one-letter code: Undecaprenyl phosphate-alpha-4-amino-4-deoxy-L-arabinose arabinosyl transferase 1 (569 aa).

The next 12 membrane-spanning stretches (helical) occupy residues 27-47, 98-120, 129-149, 151-171, 194-214, 225-245, 275-295, 311-331, 334-354, 366-386, 396-416, and 420-440; these read GLIL…GLWI, LFGV…YLLA, INAA…QAGY, NLDP…WFAI, LMTK…PYML, YGLV…LAVH, PWWF…LLLP, AYLA…SGKL, YIMP…VKWL, GVFN…LQAT, FSLS…ALQV, and LTLW…LPAA.

This sequence belongs to the glycosyltransferase 83 family.

It localises to the cell inner membrane. The enzyme catalyses 4-amino-4-deoxy-alpha-L-arabinopyranosyl di-trans,octa-cis-undecaprenyl phosphate + lipid IVA = lipid IIA + di-trans,octa-cis-undecaprenyl phosphate.. It functions in the pathway lipopolysaccharide metabolism; 4-amino-4-deoxy-beta-L-arabinose-lipid A biosynthesis. In terms of biological role, catalyzes the transfer of the L-Ara4N moiety of the glycolipid undecaprenyl phosphate-alpha-L-Ara4N to lipid A. The modified arabinose is attached to lipid A and is required for resistance to polymyxin and cationic antimicrobial peptides. This Pseudomonas fluorescens (strain Pf0-1) protein is Undecaprenyl phosphate-alpha-4-amino-4-deoxy-L-arabinose arabinosyl transferase 1.